The following is a 174-amino-acid chain: Large ribosomal subunit protein uL10 (174 aa).

The protein belongs to the universal ribosomal protein uL10 family. Part of the ribosomal stalk of the 50S ribosomal subunit. The N-terminus interacts with L11 and the large rRNA to form the base of the stalk. The C-terminus forms an elongated spine to which L12 dimers bind in a sequential fashion forming a multimeric L10(L12)X complex.

Its function is as follows. Forms part of the ribosomal stalk, playing a central role in the interaction of the ribosome with GTP-bound translation factors. The polypeptide is Large ribosomal subunit protein uL10 (Bordetella petrii (strain ATCC BAA-461 / DSM 12804 / CCUG 43448)).